The sequence spans 642 residues: MPVITLPDGSKREFAHPVSTLDVAADIGPGLAKACIAGRVNGELKDACDLIETDAELSIITAKDEEGIEILRHSCAHLLGHAIKQLWPQTKMAIGPVIDNGFYYDIDLEHKLTQEDIEALEKRMLELAKTNYDVVKRVVSWQEARDTFAARGEEYKIAILDENISKDATPALYHHEEYTDMCRGPHVPNMRFCHHFKLMSIAGAYWRGNSENKMLQRIYGTAWADKKALSTHLARLEEAAKRDHRKIGKQLDLYHMQEEAPGMVFWHNDGWSIFLELERFIRRKLNQYTYQEVKGPLMMDRVLWERSGHWDKYSEAMFTTSSENREYAVKPMNCPGHVQIFNQGLKSYRDLPLRMAEFGCCHRNEPSGSLHGLMRVRGFTQDDAHIFCTEDQVQAEVSSCIQMVYDTYSTFGFENIVVKLSTRPEKRIGDDAMWDRAEEALKQALRANNIEFTILPGEGAFYGPKIEFTLHDCLDRAWQCGTVQLDYALPSRLGATYVAEDNSRQTPVMIHRAILGSLERFLGILIEEYAGRFPTWLAPMQVVVMNITDKQADYVEEVVKFFKEQGIRASFDLRNEKIGFKIREHTLRRVPYLLVVGDQEMENKEVAVRTRDGVDLGKMRIEDFAAKIHQQISLRSLKLLEE.

The TGS domain maps to 1–61 (MPVITLPDGS…ETDAELSIIT (61 aa)). Residues 243 to 534 (DHRKIGKQLD…LIEEYAGRFP (292 aa)) form a catalytic region. Cys-334, His-385, and His-511 together coordinate Zn(2+).

The protein belongs to the class-II aminoacyl-tRNA synthetase family. Homodimer. The cofactor is Zn(2+).

The protein resides in the cytoplasm. It carries out the reaction tRNA(Thr) + L-threonine + ATP = L-threonyl-tRNA(Thr) + AMP + diphosphate + H(+). Catalyzes the attachment of threonine to tRNA(Thr) in a two-step reaction: L-threonine is first activated by ATP to form Thr-AMP and then transferred to the acceptor end of tRNA(Thr). Also edits incorrectly charged L-seryl-tRNA(Thr). The chain is Threonine--tRNA ligase from Shewanella sp. (strain ANA-3).